Consider the following 146-residue polypeptide: Large ribosomal subunit protein uL11 (146 aa).

This sequence belongs to the universal ribosomal protein uL11 family. Part of the ribosomal stalk of the 50S ribosomal subunit. Interacts with L10 and the large rRNA to form the base of the stalk. L10 forms an elongated spine to which L12 dimers bind in a sequential fashion forming a multimeric L10(L12)X complex. One or more lysine residues are methylated.

Functionally, forms part of the ribosomal stalk which helps the ribosome interact with GTP-bound translation factors. The chain is Large ribosomal subunit protein uL11 from Blochmanniella floridana.